The following is a 109-amino-acid chain: uncharacterized protein (109 aa).

Residues 42–100 (LEEKLKQEKIDRKYLAEVTNIPYTTVSRIMRAEANREFNPEIDTILKIAKYFNCTMDEV) form the HTH cro/C1-type domain. A DNA-binding region (H-T-H motif) is located at residues 53-72 (RKYLAEVTNIPYTTVSRIMR).

This is an uncharacterized protein from Rickettsia conorii (strain ATCC VR-613 / Malish 7).